The chain runs to 203 residues: Putative 3-methyladenine DNA glycosylase (203 aa).

It belongs to the DNA glycosylase MPG family.

The protein is Putative 3-methyladenine DNA glycosylase of Clostridium botulinum (strain Langeland / NCTC 10281 / Type F).